The chain runs to 418 residues: Glucose-1-phosphate adenylyltransferase (418 aa).

Alpha-D-glucose 1-phosphate contacts are provided by residues Tyr-107, Gly-172, 187–188 (EK), and Ser-205.

This sequence belongs to the bacterial/plant glucose-1-phosphate adenylyltransferase family. In terms of assembly, homotetramer.

It catalyses the reaction alpha-D-glucose 1-phosphate + ATP + H(+) = ADP-alpha-D-glucose + diphosphate. It participates in glycan biosynthesis; glycogen biosynthesis. Involved in the biosynthesis of ADP-glucose, a building block required for the elongation reactions to produce glycogen. Catalyzes the reaction between ATP and alpha-D-glucose 1-phosphate (G1P) to produce pyrophosphate and ADP-Glc. The sequence is that of Glucose-1-phosphate adenylyltransferase from Gemmatimonas aurantiaca (strain DSM 14586 / JCM 11422 / NBRC 100505 / T-27).